The following is a 1066-amino-acid chain: MHKASSSKKSFDDTIELKKNEQLLKLINSSEFTLHNCVELLCKHSENIGIHYYLCQKLATFPHSELQFYIPQLVQVLVTMETESMALEDLLLRLRAENPHFALLTFWQLQALLTDLSTDPASYGFQVARRVLNNLQTNLFNTSSGSDKNVKIHENVAPALVLSSMIMSAIAFPQLSEVTKPLVESQGRRQKAFVFKLARSAMKDFTKNMTLKNTLLNKKTSRSKRVSSNRSSTPTSPIDLIDPIKTKEDASFRKSRHSEVKLDFDIVDDIGNQVFEERISSSIKLPKRKPKYLDNSYVHRTYDGKNINRDGSISNTAKALDGNKGDYISPKGRNDENNEIGNNEDETGGETEEDADALNSDHFTSSMPDLHNIQPRTSSASSASLEGTPKLNRTNSQPLSRQAFKNSKKANSSLSQEIDLSQLSTTSKIKMLKANYFRCETQFAIALETISQRLARVPTEARLSALRAELFLLNRDLPAEVDIPTLLPPNKKGKLHKLVTITANEAQVLNSAEKVPYLLLIEYLRDEFDFDPTSETNERLLKKISGNQGGLIFDLNYMNRKENNENRNESTLTSNNTRSSVYDSNSFNNGASRNEGLSSTSRSDSASTAHVRTEVNKEEDLGDMSMVKVRNRTDDEAYRNALVIQSAANVPILPDDSQDRSPELNFGSNLDEVLIENGINSKNIHSQTDALADQMRVSAVMLAQLDKSPQQLSESTKQIRAQIISSMKEVQDKFGYHDLEALHGMAGERKLENDLMTGGIDTSYLGEDWATKKERIRKTSEYGHFENWDLCSVIAKTGDDLRQEAFAYQMIQAMANIWVKEKVDVWVKRMKILITSANTGLVETITNAMSVHSIKKALTKKMIEDAELDDKGGIASLNDHFLRAFGNPNGFKYRRAQDNFASSLAAYSVICYLLQVKDRHNGNIMIDNEGHVSHIDFGFMLSNSPGSVGFEAAPFKLTYEYIELLGGVEGEAFKKFVELTKSSFKALRKYADQIVSMCEIMQKDNMQPCFDAGEQTSVQLRQRFQLDLSEKEVDDFVENFLIGKSLGSIYTRIYDQFQLITQGIYS.

The PIK helical domain occupies 1–133; sequence MHKASSSKKS…GFQVARRVLN (133 aa). Phosphoserine occurs at positions 10 and 236. Disordered stretches follow at residues 218–240, 303–411, and 564–624; these read KKTS…PIDL, DGKN…KKAN, and NENR…LGDM. The segment covering 342-356 has biased composition (acidic residues); the sequence is NNEDETGGETEEDAD. 2 stretches are compositionally biased toward polar residues: residues 374–411 and 570–597; these read QPRT…KKAN and STLT…NEGL. The residue at position 384 (serine 384) is a Phosphoserine. Threonine 394 bears the Phosphothreonine mark. 2 positions are modified to phosphoserine: serine 396 and serine 592. Over residues 598 to 609 the composition is skewed to low complexity; it reads SSTSRSDSASTA. The PI3K/PI4K catalytic domain maps to 770 to 1049; sequence ATKKERIRKT…FLIGKSLGSI (280 aa). Positions 776 to 782 are G-loop; that stretch reads IRKTSEY. The catalytic loop stretch occupies residues 915–923; it reads QVKDRHNGN. Residues 934 to 958 are activation loop; that stretch reads HIDFGFMLSNSPGSVGFEAAPFKLT.

The protein belongs to the PI3/PI4-kinase family. Type III PI4K subfamily. As to quaternary structure, interacts with FRQ1.

Its subcellular location is the nucleus. It localises to the golgi apparatus. The protein resides in the trans-Golgi network. It carries out the reaction a 1,2-diacyl-sn-glycero-3-phospho-(1D-myo-inositol) + ATP = a 1,2-diacyl-sn-glycero-3-phospho-(1D-myo-inositol 4-phosphate) + ADP + H(+). In terms of biological role, acts on phosphatidylinositol (PI) in the first committed step in the production of the second messenger inositol 1,4,5,-trisphosphate. PIK1 is part of a nuclear phosphoinositide cycle and could control cytokinesis through the actin cytoskeleton. Involved in the response to mating pheromone. In Saccharomyces cerevisiae (strain ATCC 204508 / S288c) (Baker's yeast), this protein is Phosphatidylinositol 4-kinase PIK1.